An 815-amino-acid polypeptide reads, in one-letter code: Echinoderm microtubule-associated protein-like 1 (815 aa).

A coiled-coil region spans residues S31–Q72. The segment at N77–V179 is disordered. Residues P92–T101 are compositionally biased toward polar residues. S113 is subject to Phosphoserine. Polar residues predominate over residues T126–R138. Over residues G143–G153 the composition is skewed to basic and acidic residues. The segment covering N156–K168 has biased composition (low complexity). Residues K176–I815 form a tandem atypical propeller in EMLs region. WD repeat units lie at residues E261 to S310, T315 to W358, K363 to L400, Q409 to K446, R450 to G489, K493 to T530, F535 to A572, V578 to T613, D617 to V655, R664 to P701, S709 to Y768, and A775 to V814.

It belongs to the WD repeat EMAP family. As to quaternary structure, homotrimer; self-association is mediated by the N-terminal coiled coil. Does not interact with EML3. Binds repolymerizing microtubules. Binds unpolymerized tubulins via its WD repeat region. Interacts with TASOR. In terms of tissue distribution, ubiquitous; expressed in most tissues with the exception of thymus and peripheral blood lymphocytes.

Its subcellular location is the cytoplasm. It is found in the perinuclear region. The protein resides in the cytoskeleton. Its function is as follows. Modulates the assembly and organization of the microtubule cytoskeleton, and probably plays a role in regulating the orientation of the mitotic spindle and the orientation of the plane of cell division. Required for normal proliferation of neuronal progenitor cells in the developing brain and for normal brain development. Does not affect neuron migration per se. This chain is Echinoderm microtubule-associated protein-like 1 (EML1), found in Homo sapiens (Human).